An 87-amino-acid polypeptide reads, in one-letter code: Small ribosomal subunit protein uS17 (87 aa).

This sequence belongs to the universal ribosomal protein uS17 family. As to quaternary structure, part of the 30S ribosomal subunit.

One of the primary rRNA binding proteins, it binds specifically to the 5'-end of 16S ribosomal RNA. This Heliobacterium modesticaldum (strain ATCC 51547 / Ice1) protein is Small ribosomal subunit protein uS17.